The primary structure comprises 376 residues: Chaperone protein DnaJ (376 aa).

In terms of domain architecture, J spans 5–70; sequence DYYEVLGVGR…DKKAAYDQFG (66 aa). The segment at 132–210 adopts a CR-type zinc-finger fold; that stretch reads GLTKELRIPT…CHGEGRVEKS (79 aa). Zn(2+)-binding residues include C145, C148, C162, C165, C184, C187, C198, and C201. CXXCXGXG motif repeat units lie at residues 145-152, 162-169, 184-191, and 198-205; these read CDLCDGSG, CGTCHGQG, CPTCHGRG, and CGKCHGEG.

The protein belongs to the DnaJ family. Homodimer. Requires Zn(2+) as cofactor.

The protein resides in the cytoplasm. In terms of biological role, participates actively in the response to hyperosmotic and heat shock by preventing the aggregation of stress-denatured proteins and by disaggregating proteins, also in an autonomous, DnaK-independent fashion. Unfolded proteins bind initially to DnaJ; upon interaction with the DnaJ-bound protein, DnaK hydrolyzes its bound ATP, resulting in the formation of a stable complex. GrpE releases ADP from DnaK; ATP binding to DnaK triggers the release of the substrate protein, thus completing the reaction cycle. Several rounds of ATP-dependent interactions between DnaJ, DnaK and GrpE are required for fully efficient folding. Also involved, together with DnaK and GrpE, in the DNA replication of plasmids through activation of initiation proteins. The chain is Chaperone protein DnaJ from Shewanella loihica (strain ATCC BAA-1088 / PV-4).